Consider the following 308-residue polypeptide: Tyrosine recombinase XerD (308 aa).

Residues 13–97 form the Core-binding (CB) domain; the sequence is PSSTEAIQRF…VFKRFFQWAL (85 aa). In terms of domain architecture, Tyr recombinase spans 118-302; it reads RVPKTLSEAQ…ARERLRTLHA (185 aa). Catalysis depends on residues Arg158, Lys183, His254, Arg257, and His280. Residue Tyr289 is the O-(3'-phospho-DNA)-tyrosine intermediate of the active site.

The protein belongs to the 'phage' integrase family. XerD subfamily. Forms a cyclic heterotetrameric complex composed of two molecules of XerC and two molecules of XerD.

It localises to the cytoplasm. Functionally, site-specific tyrosine recombinase, which acts by catalyzing the cutting and rejoining of the recombining DNA molecules. The XerC-XerD complex is essential to convert dimers of the bacterial chromosome into monomers to permit their segregation at cell division. It also contributes to the segregational stability of plasmids. This Ralstonia nicotianae (strain ATCC BAA-1114 / GMI1000) (Ralstonia solanacearum) protein is Tyrosine recombinase XerD.